We begin with the raw amino-acid sequence, 669 residues long: UvrABC system protein C (669 aa).

Residues 14-91 (DSPGCYLHKD…IQRYKPKYNI (78 aa)) enclose the GIY-YIG domain. The region spanning 196–231 (KKIVKELEGKMISASDNMEFEQAAEYRDVIKAIGTL) is the UVR domain. A disordered region spans residues 647–669 (PHKSDENWESIKDNVPLLKSEKS). Over residues 648–658 (HKSDENWESIK) the composition is skewed to basic and acidic residues.

Belongs to the UvrC family. In terms of assembly, interacts with UvrB in an incision complex.

The protein localises to the cytoplasm. Its function is as follows. The UvrABC repair system catalyzes the recognition and processing of DNA lesions. UvrC both incises the 5' and 3' sides of the lesion. The N-terminal half is responsible for the 3' incision and the C-terminal half is responsible for the 5' incision. The protein is UvrABC system protein C of Lactococcus lactis subsp. cremoris (strain MG1363).